Here is a 67-residue protein sequence, read N- to C-terminus: ATP synthase F(0) complex subunit 8 (67 aa).

Residues 8 to 24 (TWFITIISSMATLFILF) form a helical membrane-spanning segment. K54 carries the post-translational modification N6-acetyllysine; alternate. Position 54 is an N6-succinyllysine; alternate (K54). K57 carries the post-translational modification N6-acetyllysine.

The protein belongs to the ATPase protein 8 family. As to quaternary structure, component of the ATP synthase complex composed at least of ATP5F1A/subunit alpha, ATP5F1B/subunit beta, ATP5MC1/subunit c (homooctomer), MT-ATP6/subunit a, MT-ATP8/subunit 8, ATP5ME/subunit e, ATP5MF/subunit f, ATP5MG/subunit g, ATP5MK/subunit k, ATP5MJ/subunit j, ATP5F1C/subunit gamma, ATP5F1D/subunit delta, ATP5F1E/subunit epsilon, ATP5PF/subunit F6, ATP5PB/subunit b, ATP5PD/subunit d, ATP5PO/subunit OSCP. ATP synthase complex consists of a soluble F(1) head domain (subunits alpha(3) and beta(3)) - the catalytic core - and a membrane F(0) domain - the membrane proton channel (subunits c, a, 8, e, f, g, k and j). These two domains are linked by a central stalk (subunits gamma, delta, and epsilon) rotating inside the F1 region and a stationary peripheral stalk (subunits F6, b, d, and OSCP). Interacts with PRICKLE3.

The protein localises to the mitochondrion membrane. Subunit 8, of the mitochondrial membrane ATP synthase complex (F(1)F(0) ATP synthase or Complex V) that produces ATP from ADP in the presence of a proton gradient across the membrane which is generated by electron transport complexes of the respiratory chain. ATP synthase complex consist of a soluble F(1) head domain - the catalytic core - and a membrane F(1) domain - the membrane proton channel. These two domains are linked by a central stalk rotating inside the F(1) region and a stationary peripheral stalk. During catalysis, ATP synthesis in the catalytic domain of F(1) is coupled via a rotary mechanism of the central stalk subunits to proton translocation. In vivo, can only synthesize ATP although its ATP hydrolase activity can be activated artificially in vitro. Part of the complex F(0) domain. The chain is ATP synthase F(0) complex subunit 8 from Rattus norvegicus (Rat).